Consider the following 361-residue polypeptide: Ribosomal RNA large subunit methyltransferase M (361 aa).

Residues serine 190, 223 to 226, aspartate 242, aspartate 262, and aspartate 280 each bind S-adenosyl-L-methionine; that span reads CPGG. Residue lysine 309 is the Proton acceptor of the active site.

Belongs to the class I-like SAM-binding methyltransferase superfamily. RNA methyltransferase RlmE family. RlmM subfamily. As to quaternary structure, monomer.

It localises to the cytoplasm. It carries out the reaction cytidine(2498) in 23S rRNA + S-adenosyl-L-methionine = 2'-O-methylcytidine(2498) in 23S rRNA + S-adenosyl-L-homocysteine + H(+). In terms of biological role, catalyzes the 2'-O-methylation at nucleotide C2498 in 23S rRNA. The chain is Ribosomal RNA large subunit methyltransferase M from Actinobacillus pleuropneumoniae serotype 7 (strain AP76).